A 408-amino-acid polypeptide reads, in one-letter code: LL-diaminopimelate aminotransferase (408 aa).

2 residues coordinate substrate: Tyr-15 and Gly-42. Pyridoxal 5'-phosphate is bound by residues Tyr-72, 108-109, Tyr-132, Asn-187, Tyr-218, and 246-248; these read SK and SFS. Substrate contacts are provided by Lys-109, Tyr-132, and Asn-187. Lys-249 carries the N6-(pyridoxal phosphate)lysine modification. Pyridoxal 5'-phosphate is bound by residues Arg-257 and Asn-292. Residues Asn-292 and Arg-388 each contribute to the substrate site.

It belongs to the class-I pyridoxal-phosphate-dependent aminotransferase family. LL-diaminopimelate aminotransferase subfamily. Homodimer. Requires pyridoxal 5'-phosphate as cofactor.

The catalysed reaction is (2S,6S)-2,6-diaminopimelate + 2-oxoglutarate = (S)-2,3,4,5-tetrahydrodipicolinate + L-glutamate + H2O + H(+). It participates in amino-acid biosynthesis; L-lysine biosynthesis via DAP pathway; LL-2,6-diaminopimelate from (S)-tetrahydrodipicolinate (aminotransferase route): step 1/1. In terms of biological role, involved in the synthesis of meso-diaminopimelate (m-DAP or DL-DAP), required for both lysine and peptidoglycan biosynthesis. Catalyzes the direct conversion of tetrahydrodipicolinate to LL-diaminopimelate. The protein is LL-diaminopimelate aminotransferase of Prochlorococcus marinus (strain MIT 9211).